The chain runs to 426 residues: Inhibin beta A chain (426 aa).

A signal peptide spans 1 to 20 (MPLLWLRGFLLASCWIIVKS). Residues 21-310 (SPTPGSEGHS…EDHPHRRRRR (290 aa)) constitute a propeptide that is removed on maturation. The N-linked (GlcNAc...) asparagine glycan is linked to Asn-165. A compositionally biased stretch (polar residues) spans 177-186 (QQQKHPQGSS). 2 disordered regions span residues 177–201 (QQQKHPQGSSDTREEAEEADLMEER) and 260–291 (KKKKEEEGEGKKKDGGEAGAGVDEEKEQSHRP). A compositionally biased stretch (basic and acidic residues) spans 263 to 275 (KEEEGEGKKKDGG). 4 cysteine pairs are disulfide-bonded: Cys-314–Cys-322, Cys-321–Cys-391, Cys-350–Cys-423, and Cys-354–Cys-425.

This sequence belongs to the TGF-beta family. Dimeric, linked by one or more disulfide bonds. Inhibin A is a dimer of alpha/INHA and beta-A/INHBA. Activin A is a homodimer of beta-A/INHBA. Activin AB is a dimer of beta-A/INHBA and beta-B/INHBB. Interacts with FST and FSTL3; these interactions prevent activin A interaction to its type II receptor. Activin A interacts with ACVR2A. Activin A interacts with BMPR2. Inhibin A interacts with ACVR1; this interaction creates a non-signaling complex (NSC) that inhibits ACVR1-mediated BMP signaling. Inhibin A interacts with ACVR2A.

It localises to the secreted. Inhibins/activins are involved in regulating a number of diverse functions such as hypothalamic and pituitary hormone secretion, gonadal hormone secretion, germ cell development and maturation, erythroid differentiation, insulin secretion, nerve cell survival, embryonic axial development or bone growth, depending on their subunit composition. Functionally, activin A is a homodimer of INHBA that plays a role in several essential biological processes including embryonic development, stem cell maintenance and differentiation, haematopoiesis, cell proliferation and tissue fibrosis. Signals through type I (such as ACVR1B or ACVR1C) and type II receptors (such as ACVR2A, ACVR2B or BMPR2) which, upon ligand binding, phosphorylate SMAD2 and SMAD3 intracellular signaling mediators that form a complex with SMAD4, translocate to the nucleus and modulate gene expression. Can also activate alternative non-canonical intracellular signaling pathways including the p38 MAPK, extracellular signal-regulated kinases 1/2 (ERK1/2) and c-Jun N-terminal kinases (JNKs) to modulate cell migration and differentiation. Alternatively, promotes osteoblastic differentiation via ACVRL1-SMAD1/5/9 pathway. In addition, can engage the type I receptor ACVR1 to form an ACVR1-activin A-type II receptor non-signaling complex (NSC) that renders receptors unavailable for engagement with BMPs, hence resulting in an apparent inhibition of ACVR1-mediated BMP signaling. In terms of biological role, inhibin A is a dimer of alpha/INHA and beta-A/INHBA that functions as a feedback regulator in the hypothalamic-pituitary-gonadal (HPG) axis. Inhibits the secretion of FSH from the anterior pituitary gland by acting on pituitary gonadotrope cells. Antagonizes activin A by binding to the proteoglycan, betaglycan, and forming a stable complex with and, thereby, sequestering type II activin receptors while excluding type I receptor. This Equus caballus (Horse) protein is Inhibin beta A chain (INHBA).